A 1108-amino-acid polypeptide reads, in one-letter code: Alpha-mannosidase 2 (1108 aa).

Residues methionine 1–alanine 9 lie on the Cytoplasmic side of the membrane. A helical; Signal-anchor for type II membrane protein transmembrane segment spans residues leucine 10–alanine 30. At alanine 31 to serine 1108 the chain is on the lumenal side. The tract at residues alanine 70–glycine 92 is disordered. Residues histidine 153, aspartate 155, aspartate 267, and histidine 534 each contribute to the Zn(2+) site. Aspartate 267 functions as the Nucleophile in the catalytic mechanism.

It belongs to the glycosyl hydrolase 38 family. As to quaternary structure, homodimer; disulfide-linked. Requires Zn(2+) as cofactor.

It is found in the golgi apparatus membrane. It carries out the reaction N(4)-{beta-D-GlcNAc-(1-&gt;2)-alpha-D-Man-(1-&gt;3)-[alpha-D-Man-(1-&gt;3)-[alpha-D-Man-(1-&gt;6)]-alpha-D-Man-(1-&gt;6)]-beta-D-Man-(1-&gt;4)-beta-D-GlcNAc-(1-&gt;4)-beta-D-GlcNAc}-L-asparaginyl-[protein] + 2 H2O = 2 alpha-D-mannopyranose + an N(4)-{beta-D-GlcNAc-(1-&gt;2)-alpha-D-Man-(1-&gt;3)-[alpha-D-Man-(1-&gt;6)]-beta-D-Man-(1-&gt;4)-beta-D-GlcNAc-(1-&gt;4)-beta-D-GlcNAc}-L-asparaginyl-[protein]. Its pathway is protein modification; protein glycosylation. Functionally, catalyzes the first committed step in the biosynthesis of complex N-glycans. It controls conversion of high mannose to complex N-glycans; the final hydrolytic step in the N-glycan maturation pathway. This is Alpha-mannosidase 2 from Drosophila melanogaster (Fruit fly).